Consider the following 440-residue polypeptide: Chromosome partition protein MukF (440 aa).

Positions 208-236 (LSETSGTLRELQDTLEAAGDKLQANLLRI) are leucine-zipper.

Belongs to the MukF family. As to quaternary structure, interacts, and probably forms a ternary complex, with MukE and MukB via its C-terminal region. The complex formation is stimulated by calcium or magnesium. It is required for an interaction between MukE and MukB.

The protein localises to the cytoplasm. Its subcellular location is the nucleoid. Involved in chromosome condensation, segregation and cell cycle progression. May participate in facilitating chromosome segregation by condensation DNA from both sides of a centrally located replisome during cell division. Not required for mini-F plasmid partitioning. Probably acts via its interaction with MukB and MukE. Overexpression results in anucleate cells. It has a calcium binding activity. This Shigella boydii serotype 4 (strain Sb227) protein is Chromosome partition protein MukF.